The sequence spans 694 residues: Polyphosphate kinase (694 aa).

Residue N45 participates in ATP binding. The Mg(2+) site is built by R367 and R397. H427 functions as the Phosphohistidine intermediate in the catalytic mechanism. The ATP site is built by Y460, R553, and H580.

This sequence belongs to the polyphosphate kinase 1 (PPK1) family. Requires Mg(2+) as cofactor. Post-translationally, an intermediate of this reaction is the autophosphorylated ppk in which a phosphate is covalently linked to a histidine residue through a N-P bond.

It carries out the reaction [phosphate](n) + ATP = [phosphate](n+1) + ADP. In terms of biological role, catalyzes the reversible transfer of the terminal phosphate of ATP to form a long-chain polyphosphate (polyP). The chain is Polyphosphate kinase from Campylobacter coli.